We begin with the raw amino-acid sequence, 411 residues long: Tyrosine--tRNA ligase (411 aa).

Tyr34 provides a ligand contact to L-tyrosine. Positions 39–48 (CTATSLHIGS) match the 'HIGH' region motif. The L-tyrosine site is built by Tyr171 and Gln175. The 'KMSKS' region motif lies at 231–235 (KMGKT). An ATP-binding site is contributed by Lys234. In terms of domain architecture, S4 RNA-binding spans 345–411 (ISAYKLFYNV…GKKRHILVKV (67 aa)).

It belongs to the class-I aminoacyl-tRNA synthetase family. TyrS type 1 subfamily. In terms of assembly, homodimer.

It is found in the cytoplasm. The catalysed reaction is tRNA(Tyr) + L-tyrosine + ATP = L-tyrosyl-tRNA(Tyr) + AMP + diphosphate + H(+). Catalyzes the attachment of tyrosine to tRNA(Tyr) in a two-step reaction: tyrosine is first activated by ATP to form Tyr-AMP and then transferred to the acceptor end of tRNA(Tyr). This Rickettsia typhi (strain ATCC VR-144 / Wilmington) protein is Tyrosine--tRNA ligase.